The following is a 321-amino-acid chain: Acetyl-coenzyme A carboxylase carboxyl transferase subunit alpha (321 aa).

Positions 39-293 (RLQQKSQTLA…RRALGDSLRQ (255 aa)) constitute a CoA carboxyltransferase C-terminal domain.

Belongs to the AccA family. As to quaternary structure, acetyl-CoA carboxylase is a heterohexamer composed of biotin carboxyl carrier protein (AccB), biotin carboxylase (AccC) and two subunits each of ACCase subunit alpha (AccA) and ACCase subunit beta (AccD).

It is found in the cytoplasm. The catalysed reaction is N(6)-carboxybiotinyl-L-lysyl-[protein] + acetyl-CoA = N(6)-biotinyl-L-lysyl-[protein] + malonyl-CoA. It participates in lipid metabolism; malonyl-CoA biosynthesis; malonyl-CoA from acetyl-CoA: step 1/1. Its function is as follows. Component of the acetyl coenzyme A carboxylase (ACC) complex. First, biotin carboxylase catalyzes the carboxylation of biotin on its carrier protein (BCCP) and then the CO(2) group is transferred by the carboxyltransferase to acetyl-CoA to form malonyl-CoA. The chain is Acetyl-coenzyme A carboxylase carboxyl transferase subunit alpha from Bordetella avium (strain 197N).